The primary structure comprises 1433 residues: Bacillopeptidase F (1433 aa).

The signal sequence occupies residues 1-30 (MRKKTKNRLISSVLSTVVISSLLFPGAAGA). A propeptide spanning residues 31–194 (SSKVTSPSVK…NMKKAQKAIK (164 aa)) is cleaved from the precursor. The 110-residue stretch at 68–177 (TFLIKFKDLA…KVLPNEKRQL (110 aa)) folds into the Inhibitor I9 domain. In terms of domain architecture, Peptidase S8 spans 200–512 (EWNVDQIDAP…HGLVNAFDAV (313 aa)). Catalysis depends on charge relay system residues aspartate 227, histidine 274, and serine 452. The propeptide occupies 756–1433 (SAYKGQNIQV…NGKLNMNTEN (678 aa)). The interval 800–830 (KLGVEKPSGKQKKKPVNPKKAKPSANTAVKH) is disordered. The span at 808–821 (GKQKKKPVNPKKAK) shows a compositional bias: basic residues.

The protein belongs to the peptidase S8 family.

It is found in the secreted. The sequence is that of Bacillopeptidase F (bpr) from Bacillus subtilis (strain 168).